The sequence spans 163 residues: uncharacterized protein (163 aa).

The segment at 144-163 (WSHSQSQLGTPGRGKGALGF) is disordered. A compositionally biased stretch (gly residues) spans 154 to 163 (PGRGKGALGF).

This is an uncharacterized protein from Homo sapiens (Human).